A 1319-amino-acid polypeptide reads, in one-letter code: MKEKHENWSHPLAFWLCDCAAIIPNPATQNFAKNDFLDGLLMLNLMKFINPHFSENEKNGQSLYEELLNQISQFYEKNLDQVIVCKMPEISILESSGEIDEITFEELKKLLLLLLGCAIQSDHKKVFVDRITGFDQTIQAELAACIQKLTESDEIVQNLEDFERRKMKETDEVGGGGGSIEDVDSDDMESSTTSSSNGEIAIKQQDQSFLMSRSTSPTSELRHQTLQIANLQHEMRQMRTQAENRDEECQKLELDNEEKAQKIKILENERLKLVDFKKKWKSVNDDLQEANCKIEKLQNLVGIEKKYREARDGKELYKSKYDIVVKKNLEMEETITTLEKNLKTLQMEMKEKFGVEDNLQRMRNTIDDLEAEISKKNLEIEDFLDEKHRMDREIKELKEIVHQMEVPSTTTTPRIMDSLADQLENAKQDEFEMMKAEIRKLRAQTEGATPETTIIQCNQDLDTLRSQLSTEQHQTAQLHLEIQKMQVEKEQIDGNMERIGIELEEMSAQVENLNLERDEAVKQLLEARRKFGEFQMGQSRDLEEKWSKEVEKSNKISKKCEILEEKLQESDFLLAKSRDEAKKLQFELDEALEETSHVTRSLSSEKNTLKAKLLELQDQVEAQTLELLNQKNCGKRLEDRDQMISNLHNLKNELENDLKTCQTQLELESKKLQRLREDLVLEKSRRADLIGRIHSLCTTLSLNGANFEKINNDDELIDNIDDIMMNALVAVKRERDDLRIQGNQQIQELHDLKRDIEKLRRSESESLNESDDRVRELTRENMHTKEQVFMLQEKLRELNLELSTKNDEIDMVKASIEELNRNSTASCTSNAEIARLQVSIRNSQIQEDLVKQENTKLRDELQEMQKMSKKRSQNLDELENMHKTLLVDHSRLQQLHNLLTRDYDEAKKESMELRQKVQNIPRQQAVFMNANIRELEAKLSEEISRREQLEKEHKMCRIHCENLRRDITELVQTRDELSLELRRAHDTCHNKNNQIDELKKQLNQKISEVNKLSSKIEALSQLNRTYNEENRNLSRQLEILLTQNKELLQRALHDKDQYHLEMKDFQDQLSALRRHKEKLEDKIMDQYRTMENKKSTPERKQPLVKRAAKALINRRRATSNGGSTTEDSSVYSADERSSPPLAGTNEDVDHLPPTCSSSDDHDVISPDFSAKNPLLRSRNDFMGGSVRSPRRYGNDHDGHIYTSPFLPPRVPIRNSPMTSSLRSRPPPPPYNRSPAHKIEQNSSFFEPIAHSTPNSSILEERRVVGEGEKRELVRDKEERIDKTLSYYENVNLPQNPPDLPENSDLKPNESTIWHEYGCV.

The 113-residue stretch at 6–118 (ENWSHPLAFW…KLLLLLLGCA (113 aa)) folds into the Calponin-homology (CH) domain. 3 coiled-coil regions span residues 141-173 (ELAA…TDEV), 218-690 (TSEL…ADLI), and 732-1096 (KRER…KKST). Residues 166 to 222 (KMKETDEVGGGGGSIEDVDSDDMESSTTSSSNGEIAIKQQDQSFLMSRSTSPTSELR) form a disordered region. Positions 204-222 (QQDQSFLMSRSTSPTSELR) are enriched in polar residues. Disordered regions lie at residues 1112–1236 (INRR…SPAH) and 1289–1308 (NVNL…LKPN). The segment covering 1118-1131 (TSNGGSTTEDSSVY) has biased composition (polar residues).

Belongs to the CCDC88 family. As to expression, expressed in AQR and PQR gas-sensing neurons in hermaphrodites (at protein level).

It is found in the cytoplasm. It localises to the cytoskeleton. The protein localises to the cilium basal body. The protein resides in the microtubule organizing center. Its subcellular location is the centrosome. It is found in the centriole. Scaffolding protein that plays a role in ciliogenesis, cilium positioning and dendrite anchoring in sensory amphid neurons including AWB, AWA, AWC, ADL and ASI, the phasmid neurons PHA and PHB and the gas sensing neurons AQR, PQR, URX and BAG. Its role in cilium positioning may be through regulation of the localization of cell adhesion proteins such as the apical junction protein ajm-1, and the ciliary scaffolding protein Rootletin/che-10. Plays a more prominent role in regulating dendrite morphogenesis in AQR than in PQR neurons. Regulates localization of hmr-1 to the distal AQR dendrite. During embryonic elongation, required for the anchoring of URX and BAG dendrites to the presumptive nose. The polypeptide is Girdin homolog (Caenorhabditis elegans).